Reading from the N-terminus, the 415-residue chain is Tyrosine--tRNA ligase (415 aa).

Residue Tyr34 coordinates L-tyrosine. The short motif at 39–48 is the 'HIGH' region element; it reads PTADSLHLGH. L-tyrosine is bound by residues Tyr164 and Gln168. Positions 226 to 230 match the 'KMSKS' region motif; sequence KFGKS. Position 229 (Lys229) interacts with ATP. An S4 RNA-binding domain is found at 348-415; that stretch reads KNIVDFLVDG…KKKYFLGKIK (68 aa).

The protein belongs to the class-I aminoacyl-tRNA synthetase family. TyrS type 1 subfamily. Homodimer.

The protein localises to the cytoplasm. It carries out the reaction tRNA(Tyr) + L-tyrosine + ATP = L-tyrosyl-tRNA(Tyr) + AMP + diphosphate + H(+). Its function is as follows. Catalyzes the attachment of tyrosine to tRNA(Tyr) in a two-step reaction: tyrosine is first activated by ATP to form Tyr-AMP and then transferred to the acceptor end of tRNA(Tyr). The polypeptide is Tyrosine--tRNA ligase (Leuconostoc citreum (strain KM20)).